A 360-amino-acid chain; its full sequence is Peptide chain release factor 1 (360 aa).

Residue Gln-237 is modified to N5-methylglutamine.

Belongs to the prokaryotic/mitochondrial release factor family. Post-translationally, methylated by PrmC. Methylation increases the termination efficiency of RF1.

Its subcellular location is the cytoplasm. Its function is as follows. Peptide chain release factor 1 directs the termination of translation in response to the peptide chain termination codons UAG and UAA. This Azotobacter vinelandii (strain DJ / ATCC BAA-1303) protein is Peptide chain release factor 1.